The sequence spans 108 residues: Complement inhibitor CirpT2 (108 aa).

Positions 1–19 are cleaved as a signal peptide; the sequence is MRTLVASLCVFAVFSAVCC. 4 disulfides stabilise this stretch: Cys-40–Cys-64, Cys-59–Cys-98, Cys-76–Cys-99, and Cys-85–Cys-104.

This sequence belongs to the CirpT family. Expressed in salivary glands.

The protein resides in the secreted. In terms of biological role, complement inhibitor. Prevents complement-mediated activation of C5 by sterically preventing direct binding of C5 to its convertase (binding with domains MG4 and MG5). Binds C5 at a different binding site than the other tick complement inhibitors OmCI and RaCI3, and the drug eculizumab. Inhibits the complement in human, rat and guinea pig, and also shows a reduced inhibition in rabbit and pig. This Dermacentor andersoni (Rocky mountain wood tick) protein is Complement inhibitor CirpT2.